Consider the following 631-residue polypeptide: MKGIKKSLTEEYLYLDFSHQKEGCIFPLHTSVTLFLLSYCDCTVFKVFLVLPGESTGISLLKNVPSEGVEIQTISRQELPPIVQSCCLPAVVERPDNFCRAGLAVVLRHIIQKSYEADPSKKEILELLGFKKTCLKACAEVSQWTRLCELTVPLAVENFLKESFDQPPTIPAAILELEKKLSEPVRVHNDDKLRRQKLKQQKAAGVGPSLAKEKTKSKGHRQETSEEGDSSSASLELKVAFSKLTIHKEPASANREPSYVRKAKASDLPPLDHVFAEGLYFTLADIVLLPCIHHFLVIICRKLSGKLVEFPLVAAWYQRIQEVPRVQTAASQCGIQFISLPELQTTSSQQPPNLDEAPSAEEQNDPSFIGGPRPTMTKLMEKGIEVMFSPHPCPTWTLDWDTLPAAVSPKEGKMSSDRALRKQQQLNNLVYMVTNQAKPGDRIVDFCSGGGHVGIVLAHVLPSCQVILIENKELSLIRAKKRSDELGLSNIWFIQANMEYFTGMFNIGVALHACGVATDMVIEHCLKTRASFVTCPCCYGFIQNTSKVNFPKSELFKKTLSYKEHMILCRFADQTAVQLPPQRRLIGKQCMCLVDLDRARAAEEHGFSVQVISMEPESCSPKNNMIVGVPI.

Residues 128-330 form the GST C-terminal domain; that stretch reads LGFKKTCLKA…QEVPRVQTAA (203 aa). 2 disordered regions span residues 188–233 and 345–373; these read HNDD…SSSA and TTSS…GGPR. Over residues 211 to 224 the composition is skewed to basic and acidic residues; sequence AKEKTKSKGHRQET. Serine 231 bears the Phosphoserine mark.

The protein belongs to the GSTCD family.

It localises to the cytoplasm. The protein is Glutathione S-transferase C-terminal domain-containing protein (GSTCD) of Bos taurus (Bovine).